The chain runs to 292 residues: GTP cyclohydrolase FolE2 (292 aa).

The protein belongs to the GTP cyclohydrolase IV family.

The catalysed reaction is GTP + H2O = 7,8-dihydroneopterin 3'-triphosphate + formate + H(+). Its pathway is cofactor biosynthesis; 7,8-dihydroneopterin triphosphate biosynthesis; 7,8-dihydroneopterin triphosphate from GTP: step 1/1. Its function is as follows. Converts GTP to 7,8-dihydroneopterin triphosphate. In Staphylococcus saprophyticus subsp. saprophyticus (strain ATCC 15305 / DSM 20229 / NCIMB 8711 / NCTC 7292 / S-41), this protein is GTP cyclohydrolase FolE2.